A 221-amino-acid polypeptide reads, in one-letter code: GTP-binding nuclear protein Ran-1 (221 aa).

The 165-residue stretch at 10 to 174 folds into the Small GTPase Ran-type domain; the sequence is DYPSFKLVIV…LYLARKLAGD (165 aa). Residue 21 to 28 participates in GTP binding; sequence DGGTGKTT. Positions 40–48 are switch-I; that stretch reads KKYEPTIGV. GTP-binding positions include Gly-71, 125–128, and 153–155; these read NKVD and SAK. The interval 71–87 is switch-II; it reads GQEKFGGLRDGYYIHGQ.

Belongs to the small GTPase superfamily. Ran family. As to quaternary structure, found in a nuclear export complex with RanGTP, exportin and pre-miRNA.

The protein localises to the nucleus. In terms of biological role, GTP-binding protein involved in nucleocytoplasmic transport. Required for the import of protein into the nucleus and also for RNA export. Involved in chromatin condensation and control of cell cycle. The polypeptide is GTP-binding nuclear protein Ran-1 (RAN1) (Oryza sativa subsp. indica (Rice)).